Consider the following 769-residue polypeptide: Calcium up-regulated protein F (769 aa).

Residues 1–21 (MINIKDISKSSNQSEEKSLKG) are disordered. 2 consecutive Ricin B-type lectin domains span residues 25-145 (KTKY…WTTF) and 116-249 (QGNG…WGIN).

Belongs to the cup family.

The protein resides in the cytoplasm. It localises to the membrane. Functionally, may play an important role in stabilizing and/or regulating the cell membrane during Ca(2+) stress or certain stages of development. This Dictyostelium discoideum (Social amoeba) protein is Calcium up-regulated protein F (cupF).